The following is a 140-amino-acid chain: Large ribosomal subunit protein uL16c (140 aa).

It belongs to the universal ribosomal protein uL16 family. Part of the 50S ribosomal subunit.

The protein localises to the plastid. The protein resides in the chloroplast. The protein is Large ribosomal subunit protein uL16c of Cyanidium caldarium (Red alga).